A 349-amino-acid chain; its full sequence is Shematrin-like protein 1 (349 aa).

A signal peptide spans 1 to 16 (MLKLVCAVFLIATVSA).

Prismatic layer of shell (at protein level).

The protein resides in the secreted. In Margaritifera margaritifera (Freshwater pearl mussel), this protein is Shematrin-like protein 1.